Reading from the N-terminus, the 387-residue chain is Chorismate synthase (387 aa).

Positions 40 and 46 each coordinate NADP(+). FMN contacts are provided by residues 129-131 (RSS), 250-251 (QA), Gly295, 310-314 (KPIPT), and Arg336.

The protein belongs to the chorismate synthase family. In terms of assembly, homotetramer. It depends on FMNH2 as a cofactor.

It catalyses the reaction 5-O-(1-carboxyvinyl)-3-phosphoshikimate = chorismate + phosphate. Its pathway is metabolic intermediate biosynthesis; chorismate biosynthesis; chorismate from D-erythrose 4-phosphate and phosphoenolpyruvate: step 7/7. Functionally, catalyzes the anti-1,4-elimination of the C-3 phosphate and the C-6 proR hydrogen from 5-enolpyruvylshikimate-3-phosphate (EPSP) to yield chorismate, which is the branch point compound that serves as the starting substrate for the three terminal pathways of aromatic amino acid biosynthesis. This reaction introduces a second double bond into the aromatic ring system. This Desulforamulus reducens (strain ATCC BAA-1160 / DSM 100696 / MI-1) (Desulfotomaculum reducens) protein is Chorismate synthase.